The following is a 370-amino-acid chain: tRNA-specific 2-thiouridylase MnmA (370 aa).

Residues 24–31 (AMSGGVDS) and leucine 50 each bind ATP. The active-site Nucleophile is cysteine 119. The cysteines at positions 119 and 215 are disulfide-linked. Residue glycine 143 participates in ATP binding. Residues 165-167 (KDQ) form an interaction with tRNA region. The Cysteine persulfide intermediate role is filled by cysteine 215.

It belongs to the MnmA/TRMU family.

Its subcellular location is the cytoplasm. It carries out the reaction S-sulfanyl-L-cysteinyl-[protein] + uridine(34) in tRNA + AH2 + ATP = 2-thiouridine(34) in tRNA + L-cysteinyl-[protein] + A + AMP + diphosphate + H(+). Its function is as follows. Catalyzes the 2-thiolation of uridine at the wobble position (U34) of tRNA, leading to the formation of s(2)U34. The sequence is that of tRNA-specific 2-thiouridylase MnmA from Wolbachia sp. subsp. Drosophila simulans (strain wRi).